The sequence spans 348 residues: Interferon regulatory factor 2 (348 aa).

Positions 5–113 (RMRMRPWLEE…NAFRVYRMLP (109 aa)) form a DNA-binding region, IRF tryptophan pentad repeat. 2 positions are modified to N6-acetyllysine: lysine 75 and lysine 78. Residues 117 to 137 (RPSKKGKKTKSEKDDKFKQIK) form a disordered region. Residues 125–137 (TKSEKDDKFKQIK) show a composition bias toward basic and acidic residues. Residues lysine 137, lysine 164, and lysine 291 each participate in a glycyl lysine isopeptide (Lys-Gly) (interchain with G-Cter in SUMO) cross-link. The tract at residues 311–348 (LPQVVSTASTSSSRPDRETRASVIKKTSDITQSRVKSC) is disordered. 2 stretches are compositionally biased toward polar residues: residues 314 to 323 (VVSTASTSSS) and 339 to 348 (DITQSRVKSC).

Belongs to the IRF family. Interacts with CREBBP in growing cells; the interaction acetylates IRF2 and regulates IRF2-dependent H4 promoter activity.

It localises to the nucleus. Specifically binds to the upstream regulatory region of type I IFN and IFN-inducible MHC class I genes (the interferon consensus sequence (ICS)) and represses those genes. Also acts as an activator for several genes including H4 and IL7. Constitutively binds to the ISRE promoter to activate IL7. Involved in cell cycle regulation through binding the site II (HiNF-M) promoter region of H4 and activating transcription during cell growth. Antagonizes IRF1 transcriptional activation. The polypeptide is Interferon regulatory factor 2 (IRF2) (Gallus gallus (Chicken)).